The chain runs to 189 residues: Protein OPG107 (189 aa).

Topologically, residues 1–28 (MDKTTLSVNACNLEYVREKAIVGVQAAK) are intravirion. Residues 29-49 (TSTLIFFVIILAISALLLWFQ) form a helical; Signal-anchor for type III membrane protein membrane-spanning segment. Residues 50–189 (TSDNPVFNEL…HWCSDFSNME (140 aa)) are Virion surface-facing.

It belongs to the orthopoxvirus OPG107 family. Part of a stable entry-fusion complex (EFC) which is at least composed of proteins OPG143, OPG147, OPG155, OPG86, OPG94, OPG107, OPG104, and OPG099. Formation of the viral membrane is necessary for the assembly of the complex. Contains two intramolecular disulfide bonds. They are created by the viral disulfide bond formation pathway, a poxvirus-specific pathway that operates on the cytoplasmic side of the MV membranes.

The protein resides in the virion membrane. Its subcellular location is the host endoplasmic reticulum membrane. Its function is as follows. Envelope protein part of the entry-fusion complex responsible for the virus membrane fusion with host cell membrane during virus entry. Also plays a role in cell-cell fusion (syncytium formation). The polypeptide is Protein OPG107 (OPG107) (Bos taurus (Bovine)).